We begin with the raw amino-acid sequence, 184 residues long: Thymidine kinase (184 aa).

Residues 10–17 (GPMYSGKT), His-53, and 83–86 (DEVQ) each bind ATP. Glu-84 functions as the Proton acceptor in the catalytic mechanism. Substrate is bound at residue His-115. The Zn(2+) site is built by Cys-140 and Cys-143. Substrate is bound by residues 161-164 (IDVG) and Tyr-169. Positions 173 and 176 each coordinate Zn(2+).

Belongs to the thymidine kinase family. In terms of assembly, homotetramer.

Its subcellular location is the cytoplasm. The enzyme catalyses thymidine + ATP = dTMP + ADP + H(+). This is Thymidine kinase (tdk) from Thermotoga maritima (strain ATCC 43589 / DSM 3109 / JCM 10099 / NBRC 100826 / MSB8).